A 714-amino-acid polypeptide reads, in one-letter code: Polyribonucleotide nucleotidyltransferase (714 aa).

Residues Asp488 and Asp494 each coordinate Mg(2+). One can recognise a KH domain in the interval 555 to 614; the sequence is PRIEVMNIPTDKIRDVIGSGGKVIREIVEKTGAKINIEDDGTVKIASSNGKEIEAAKKWI. One can recognise an S1 motif domain in the interval 624–692; the sequence is GEIYEGTVVK…ERGKVRLSMK (69 aa).

The protein belongs to the polyribonucleotide nucleotidyltransferase family. Mg(2+) is required as a cofactor.

It is found in the cytoplasm. It carries out the reaction RNA(n+1) + phosphate = RNA(n) + a ribonucleoside 5'-diphosphate. Its function is as follows. Involved in mRNA degradation. Catalyzes the phosphorolysis of single-stranded polyribonucleotides processively in the 3'- to 5'-direction. The sequence is that of Polyribonucleotide nucleotidyltransferase from Brucella ovis (strain ATCC 25840 / 63/290 / NCTC 10512).